We begin with the raw amino-acid sequence, 200 residues long: Alpha-amylase/subtilisin inhibitor (200 aa).

The first 22 residues, 1–22, serve as a signal peptide directing secretion; it reads MVSLRLPLILLSLLAISFSCSA. Intrachain disulfides connect C63–C112 and C162–C166.

The protein belongs to the protease inhibitor I3 (leguminous Kunitz-type inhibitor) family.

Functionally, this protein inhibits independently subtilisin and T.castaneum alpha-amylase but not barley alpha-amylase. The protein is Alpha-amylase/subtilisin inhibitor (RASI) of Oryza sativa subsp. japonica (Rice).